We begin with the raw amino-acid sequence, 467 residues long: Mitochondrial adenyl nucleotide antiporter SLC25A23 (467 aa).

Residues 1–148 (MRGGSSDAER…DHFLLHSLEN (148 aa)) form a regulatory N-terminal domain region. Residues 1–187 (MRGGSSDAER…EKLTGMWWKQ (187 aa)) are Mitochondrial intermembrane-facing. 3 EF-hand domains span residues 9 to 44 (ERRQRWGRLFEELDSNKDGRVDVHELRQGLARLGRG), 76 to 111 (EREQRLLLMFHSLDRNQDGHIDVSEIQQSFRALGIS), and 112 to 147 (ISLEQAEKILHSMDRDGTMTIDWQEWRDHFLLHSLE). The Ca(2+) site is built by D22, N24, D26, R28, and E33. The segment at 39–61 (ARLGRGDPDRAQQGVSSDWDADP) is disordered. Ca(2+) is bound by residues D89, N91, D93, H95, and E100. The interval 149-158 (VEDVLYFWKH) is linker region. Residues 164 to 467 (IGECLTVPDE…MKQALGVTSR (304 aa)) are C-terminal transmembrane transporter domain. 3 Solcar repeats span residues 182–268 (GMWW…IKRA), 276–361 (LHVQ…LKNR), and 373–461 (PGIL…MKQA). A helical membrane pass occupies residues 188–205 (LVAGAVAGAVSRTGTAPL). Residues 206-242 (DRLKVFMQVHASKSNRLNILGGLRNMIQEGGVLSLWR) are Mitochondrial matrix-facing. A helical transmembrane segment spans residues 243–262 (GNGINVLKIAPESAIKFMAY). Over 263-285 (EQIKRAIRGQQETLHVQERFVAG) the chain is Mitochondrial intermembrane. Residues 286 to 299 (SLAGATAQTIIYPM) form a helical membrane-spanning segment. Over 300–335 (EVLKTRLTLRRTGQYKGLLDCAKRILEREGPRAFYR) the chain is Mitochondrial matrix. The helical transmembrane segment at 336-355 (GYLPNVLGIIPYAGIDLAVY) threads the bilayer. Residues 356-378 (ETLKNRWLQQYSHESANPGILVL) lie on the Mitochondrial intermembrane side of the membrane. A helical membrane pass occupies residues 379-396 (LGCGTISSTCGQIASYPL). Residues 397 to 435 (ALVRTRMQAQASIEGGPQVSMVGLLRHILSQEGVWGLYR) lie on the Mitochondrial matrix side of the membrane. Residues 436–455 (GIAPNFMKVIPAVSISYVVY) form a helical membrane-spanning segment. Residues 456 to 467 (ENMKQALGVTSR) lie on the Mitochondrial intermembrane side of the membrane.

Belongs to the mitochondrial carrier (TC 2.A.29) family. Interacts with MCU. Interacts with MICU1.

It is found in the mitochondrion inner membrane. It catalyses the reaction Mg(2+)(out) + phosphate(in) + ATP(out) = Mg(2+)(in) + phosphate(out) + ATP(in). The catalysed reaction is ADP(out) + phosphate(in) + H(+)(out) = ADP(in) + phosphate(out) + H(+)(in). It carries out the reaction AMP(out) + phosphate(in) = AMP(in) + phosphate(out). The enzyme catalyses phosphate(in) + ATP(out) + 2 H(+)(out) = phosphate(out) + ATP(in) + 2 H(+)(in). It catalyses the reaction dADP(in) + ADP(out) = dADP(out) + ADP(in). The catalysed reaction is Mg(2+)(in) + ADP(out) + ATP(in) + H(+)(out) = Mg(2+)(out) + ADP(in) + ATP(out) + H(+)(in). It carries out the reaction ADP(out) + diphosphate(in) = ADP(in) + diphosphate(out). The enzyme catalyses dAMP(in) + ADP(out) + H(+)(out) = dAMP(out) + ADP(in) + H(+)(in). It catalyses the reaction 3'-AMP(in) + ADP(out) + H(+)(out) = 3'-AMP(out) + ADP(in) + H(+)(in). The catalysed reaction is dAMP(out) + phosphate(in) = dAMP(in) + phosphate(out). It carries out the reaction 3'-AMP(out) + phosphate(in) = 3'-AMP(in) + phosphate(out). The enzyme catalyses dADP(out) + phosphate(in) + H(+)(out) = dADP(in) + phosphate(out) + H(+)(in). Its activity is regulated as follows. Activated by an increase in cytosolic calcium levels that induce a conformational change of the N-terminal regulatory domain, uncapping the channel and allowing transport. Its function is as follows. Electroneutral antiporter that mediates the transport of adenine nucleotides through the inner mitochondrial membrane. Originally identified as an ATP-magnesium/inorganic phosphate antiporter, it also acts as a broad specificity adenyl nucleotide antiporter. By regulating the mitochondrial matrix adenine nucleotide pool could adapt to changing cellular energetic demands and indirectly regulate adenine nucleotide-dependent metabolic pathways. Also acts as a regulator of mitochondrial calcium uptake and can probably transport trace amounts of other divalent metal cations in complex with ATP. In vitro, a low activity is also observed with guanyl and pyrimidine nucleotides. This chain is Mitochondrial adenyl nucleotide antiporter SLC25A23, found in Mus musculus (Mouse).